Reading from the N-terminus, the 31-residue chain is Cytochrome b6-f complex subunit 6 (31 aa).

The chain crosses the membrane as a helical span at residues 4-26 (LTSYFGFLLAASTITPALFIGLN).

This sequence belongs to the PetL family. As to quaternary structure, the 4 large subunits of the cytochrome b6-f complex are cytochrome b6, subunit IV (17 kDa polypeptide, PetD), cytochrome f and the Rieske protein, while the 4 small subunits are PetG, PetL, PetM and PetN. The complex functions as a dimer.

It localises to the plastid. The protein resides in the chloroplast thylakoid membrane. Component of the cytochrome b6-f complex, which mediates electron transfer between photosystem II (PSII) and photosystem I (PSI), cyclic electron flow around PSI, and state transitions. PetL is important for photoautotrophic growth as well as for electron transfer efficiency and stability of the cytochrome b6-f complex. This is Cytochrome b6-f complex subunit 6 from Phalaenopsis aphrodite subsp. formosana (Moth orchid).